The sequence spans 169 residues: Histone H1.9 (169 aa).

2 stretches are compositionally biased toward polar residues: residues 1–10 (MSLVSPSPDS) and 19–36 (DAST…IGPN). Residues 1–36 (MSLVSPSPDSNAVMAGDQDASTSQVPSQSESKIGPN) are disordered. Residues 43 to 116 (RKPTMSKVIL…GASGSFRLGK (74 aa)) enclose the H15 domain. Phosphoserine occurs at positions 62 and 65. Residues 118–142 (QAFKSKCKAKRRQRRQKPGQRRTGS) show a composition bias toward basic residues. Residues 118-154 (QAFKSKCKAKRRQRRQKPGQRRTGSRRSLLGSKKSNN) form a disordered region.

The protein belongs to the histone H1/H5 family.

It is found in the nucleus. It localises to the chromosome. Functionally, DNA-binding protein that may be implicated in chromatin remodeling and/or transcriptional regulation during spermiogenesis, the process of spermatid maturation into spermatozoa. In Rattus norvegicus (Rat), this protein is Histone H1.9.